The sequence spans 64 residues: Small ribosomal subunit protein bS21 (64 aa).

Residues Lys-42–Tyr-64 are disordered. Basic residues predominate over residues Ala-50 to Tyr-64.

It belongs to the bacterial ribosomal protein bS21 family.

In Malacoplasma penetrans (strain HF-2) (Mycoplasma penetrans), this protein is Small ribosomal subunit protein bS21.